A 473-amino-acid polypeptide reads, in one-letter code: Serine palmitoyltransferase 1 (473 aa).

The Lumenal portion of the chain corresponds to 1–15 (MAMAAEQWVLVEMVQ). The interaction with SPTLC2 stretch occupies residues 1-66 (MAMAAEQWVL…KEELIEEWQP (66 aa)). Residues 16 to 36 (ALYEAPAYHLILEGILILWII) traverse the membrane as a helical segment. The Cytoplasmic portion of the chain corresponds to 37-473 (RLVFSKTYKL…IREAAQAVLL (437 aa)). At Tyr164 the chain carries Phosphotyrosine; by ABL.

It belongs to the class-II pyridoxal-phosphate-dependent aminotransferase family. As to quaternary structure, component of the serine palmitoyltransferase (SPT) complex, which is also composed of SPTLC2 or SPTLC3 and SPTSSA or SPTSSB. The heterodimer with SPTLC2 or SPTLC3 forms the catalytic core of the enzyme, while SPTSSA or SPTSSB subunits determine substrate specificity. SPT also interacts with ORMDL proteins, especially ORMDL3, which negatively regulate SPT activity in the presence of ceramides. Forms dimers of heterodimers with SPTLC2. Interacts with RTN4. Pyridoxal 5'-phosphate serves as cofactor. Phosphorylation at Tyr-164 inhibits activity and promotes cell survival.

Its subcellular location is the endoplasmic reticulum membrane. It carries out the reaction L-serine + hexadecanoyl-CoA + H(+) = 3-oxosphinganine + CO2 + CoA. The catalysed reaction is octadecanoyl-CoA + L-serine + H(+) = 3-oxoeicosasphinganine + CO2 + CoA. The enzyme catalyses tetradecanoyl-CoA + L-serine + H(+) = 3-oxohexadecasphinganine + CO2 + CoA. It catalyses the reaction dodecanoyl-CoA + L-serine + H(+) = 3-oxotetradecasphinganine + CO2 + CoA. Its pathway is lipid metabolism; sphingolipid metabolism. With respect to regulation, SPT complex catalytic activity is negatively regulated by ORMDL proteins, including ORMDL3, in the presence of ceramides. This mechanism allows to maintain ceramide levels at sufficient concentrations for the production of complex sphingolipids, but which prevents the accumulation of ceramides to levels that trigger apoptosis. Its function is as follows. Component of the serine palmitoyltransferase multisubunit enzyme (SPT) that catalyzes the initial and rate-limiting step in sphingolipid biosynthesis by condensing L-serine and activated acyl-CoA (most commonly palmitoyl-CoA) to form long-chain bases. The SPT complex is also composed of SPTLC2 or SPTLC3 and SPTSSA or SPTSSB. Within this complex, the heterodimer with SPTLC2 or SPTLC3 forms the catalytic core. The composition of the serine palmitoyltransferase (SPT) complex determines the substrate preference. The SPTLC1-SPTLC2-SPTSSA complex shows a strong preference for C16-CoA substrate, while the SPTLC1-SPTLC3-SPTSSA isozyme uses both C14-CoA and C16-CoA as substrates, with a slight preference for C14-CoA. The SPTLC1-SPTLC2-SPTSSB complex shows a strong preference for C18-CoA substrate, while the SPTLC1-SPTLC3-SPTSSB isozyme displays an ability to use a broader range of acyl-CoAs, without apparent preference. Required for adipocyte cell viability and metabolic homeostasis. The chain is Serine palmitoyltransferase 1 (SPTLC1) from Cricetulus griseus (Chinese hamster).